We begin with the raw amino-acid sequence, 278 residues long: Diaminopimelate epimerase (278 aa).

The substrate site is built by Asn13, Gln46, and Asn67. The active-site Proton donor is the Cys76. Residues 77 to 78 (GN), Asn160, Asn193, and 211 to 212 (ER) contribute to the substrate site. Catalysis depends on Cys220, which acts as the Proton acceptor. 221 to 222 (GT) is a binding site for substrate.

It belongs to the diaminopimelate epimerase family. In terms of assembly, homodimer.

The protein localises to the cytoplasm. The catalysed reaction is (2S,6S)-2,6-diaminopimelate = meso-2,6-diaminopimelate. It functions in the pathway amino-acid biosynthesis; L-lysine biosynthesis via DAP pathway; DL-2,6-diaminopimelate from LL-2,6-diaminopimelate: step 1/1. Functionally, catalyzes the stereoinversion of LL-2,6-diaminopimelate (L,L-DAP) to meso-diaminopimelate (meso-DAP), a precursor of L-lysine and an essential component of the bacterial peptidoglycan. The polypeptide is Diaminopimelate epimerase (Thioalkalivibrio sulfidiphilus (strain HL-EbGR7)).